Here is a 674-residue protein sequence, read N- to C-terminus: E3 ubiquitin ligase Rnf157 (674 aa).

An RING-type zinc finger spans residues 277 to 316 (CVVCLSDVRDTLILPCRHLCLCNACADTLRYQASNCPICR). Disordered regions lie at residues 376 to 404 (LTPS…GSDI) and 433 to 610 (QNSS…TGRE). Polar residues predominate over residues 469 to 508 (TPESENLTLSSSGAIDQSSCTGTPLSPTISSPEDPLSSSL). Over residues 509–526 (AQSIMSMASSHSQQSQLS) the composition is skewed to low complexity. Residues 527-537 (TDTVSSMSGSY) are compositionally biased toward polar residues. Residues 583-604 (EEMDAEGNVTEEEFASPEEDDG) are compositionally biased toward acidic residues.

It localises to the cytoplasm. The catalysed reaction is S-ubiquitinyl-[E2 ubiquitin-conjugating enzyme]-L-cysteine + [acceptor protein]-L-lysine = [E2 ubiquitin-conjugating enzyme]-L-cysteine + N(6)-ubiquitinyl-[acceptor protein]-L-lysine.. E3 ubiquitin ligase that ubiquitinates apbb1 for its degradation by the proteasome and thus prevents apoptosis and promotes survival of neurons. Has a dual role in neurons as it is also required for dendrite growth and maintenance for which its ligase activity is not critical. May act as a scaffold molecule to regulate this process. Acts as a downstream effector of the interconnected PI3K and MAPK signaling pathways and thus participates in the regulation of the cell cycle. The polypeptide is E3 ubiquitin ligase Rnf157 (rnf157) (Xenopus laevis (African clawed frog)).